The sequence spans 286 residues: Shikimate dehydrogenase (NADP(+)) (286 aa).

Shikimate-binding positions include serine 22 to serine 24 and threonine 69. Lysine 73 serves as the catalytic Proton acceptor. Glutamate 85 contacts NADP(+). Shikimate is bound by residues asparagine 94 and aspartate 109. NADP(+) is bound by residues glycine 133–alanine 137 and valine 231. Tyrosine 233 lines the shikimate pocket. An NADP(+)-binding site is contributed by glycine 254.

It belongs to the shikimate dehydrogenase family. Homodimer.

The enzyme catalyses shikimate + NADP(+) = 3-dehydroshikimate + NADPH + H(+). It participates in metabolic intermediate biosynthesis; chorismate biosynthesis; chorismate from D-erythrose 4-phosphate and phosphoenolpyruvate: step 4/7. Functionally, involved in the biosynthesis of the chorismate, which leads to the biosynthesis of aromatic amino acids. Catalyzes the reversible NADPH linked reduction of 3-dehydroshikimate (DHSA) to yield shikimate (SA). This chain is Shikimate dehydrogenase (NADP(+)), found in Alkaliphilus metalliredigens (strain QYMF).